The sequence spans 187 residues: Orotate phosphoribosyltransferase (187 aa).

5-phospho-alpha-D-ribose 1-diphosphate-binding positions include R98, K99, K102, H104, and 128–136 (EDVTTTGGS). T132 and R160 together coordinate orotate.

The protein belongs to the purine/pyrimidine phosphoribosyltransferase family. PyrE subfamily. As to quaternary structure, homodimer. Requires Mg(2+) as cofactor.

The catalysed reaction is orotidine 5'-phosphate + diphosphate = orotate + 5-phospho-alpha-D-ribose 1-diphosphate. Its pathway is pyrimidine metabolism; UMP biosynthesis via de novo pathway; UMP from orotate: step 1/2. Catalyzes the transfer of a ribosyl phosphate group from 5-phosphoribose 1-diphosphate to orotate, leading to the formation of orotidine monophosphate (OMP). The sequence is that of Orotate phosphoribosyltransferase from Rhodopseudomonas palustris (strain BisB18).